The chain runs to 245 residues: Probable metal transport system ATP-binding protein CPn_0542/CP_0210/CPj0542/CpB0563 (245 aa).

Positions 5 to 240 constitute an ABC transporter domain; sequence ILAEGLAFRY…CCHPYKNQEF (236 aa). 39–46 serves as a coordination point for ATP; it reads GPNGGGKS.

This sequence belongs to the ABC transporter superfamily.

It localises to the cell inner membrane. Functionally, part of an ATP-driven transport system CPn0541/CPn0542/CPn0543 for a metal. Probably responsible for energy coupling to the transport system. The protein is Probable metal transport system ATP-binding protein CPn_0542/CP_0210/CPj0542/CpB0563 of Chlamydia pneumoniae (Chlamydophila pneumoniae).